A 428-amino-acid chain; its full sequence is Protein CLP1 homolog (428 aa).

ATP is bound by residues Glu22, Lys63, and 127 to 132; that span reads DVGKST.

It belongs to the Clp1 family. Clp1 subfamily.

The protein localises to the nucleus. Functionally, required for endonucleolytic cleavage during polyadenylation-dependent pre-mRNA 3'-end formation. In Nematostella vectensis (Starlet sea anemone), this protein is Protein CLP1 homolog.